Here is a 677-residue protein sequence, read N- to C-terminus: Fermitin family homolog 1 (677 aa).

Residues 96–653 enclose the FERM domain; that stretch reads MLRLRLPNAK…HEYIGGYIFL (558 aa). A disordered region spans residues 157-181; sequence KEPVIEDILNLESSSTSSGSPVSPG. The span at 169–181 shows a compositional bias: low complexity; that stretch reads SSSTSSGSPVSPG. A phosphoserine mark is found at Ser170 and Ser179. The 97-residue stretch at 377 to 473 folds into the PH domain; that stretch reads KLFRPKKLML…WMAACILASK (97 aa).

It belongs to the kindlin family. In terms of assembly, interacts with the cytoplasmic domain of integrins ITGB1 and ITGB3.

It is found in the cytoplasm. Its subcellular location is the cytoskeleton. The protein localises to the cell junction. The protein resides in the focal adhesion. It localises to the cell projection. It is found in the ruffle membrane. Its function is as follows. Involved in cell adhesion. Contributes to integrin activation. When coexpressed with talin, potentiates activation of ITGA2B. Required for normal keratinocyte proliferation. Required for normal polarization of basal keratinocytes in skin, and for normal cell shape. Required for normal adhesion of keratinocytes to fibronectin and laminin, and for normal keratinocyte migration to wound sites. The protein is Fermitin family homolog 1 (Fermt1) of Mus musculus (Mouse).